A 437-amino-acid polypeptide reads, in one-letter code: Phenylacetate-coenzyme A ligase (437 aa).

Belongs to the phenylacetyl-CoA ligase family. Monomer.

The enzyme catalyses 2-phenylacetate + ATP + CoA = phenylacetyl-CoA + AMP + diphosphate. It participates in aromatic compound metabolism; phenylacetate degradation. Its function is as follows. Catalyzes the activation of phenylacetic acid (PA) to phenylacetyl-CoA (PA-CoA). This chain is Phenylacetate-coenzyme A ligase (paaK), found in Escherichia coli (strain K12).